Reading from the N-terminus, the 81-residue chain is Photosystem I iron-sulfur center (81 aa).

4Fe-4S ferredoxin-type domains lie at 2 to 31 (SHIV…MVPW) and 39 to 68 (MASA…VRVY). Positions 11, 14, 17, 21, 48, 51, 54, and 58 each coordinate [4Fe-4S] cluster.

In terms of assembly, the eukaryotic PSI reaction center is composed of at least 11 subunits. The cofactor is [4Fe-4S] cluster.

It is found in the plastid. Its subcellular location is the chloroplast thylakoid membrane. The enzyme catalyses reduced [plastocyanin] + hnu + oxidized [2Fe-2S]-[ferredoxin] = oxidized [plastocyanin] + reduced [2Fe-2S]-[ferredoxin]. Apoprotein for the two 4Fe-4S centers FA and FB of photosystem I (PSI); essential for photochemical activity. FB is the terminal electron acceptor of PSI, donating electrons to ferredoxin. The C-terminus interacts with PsaA/B/D and helps assemble the protein into the PSI complex. Required for binding of PsaD and PsaE to PSI. PSI is a plastocyanin/cytochrome c6-ferredoxin oxidoreductase, converting photonic excitation into a charge separation, which transfers an electron from the donor P700 chlorophyll pair to the spectroscopically characterized acceptors A0, A1, FX, FA and FB in turn. The polypeptide is Photosystem I iron-sulfur center (Stigeoclonium helveticum (Green alga)).